Here is an 859-residue protein sequence, read N- to C-terminus: Magnesium transporter ALR1 (859 aa).

The segment covering 1–20 has biased composition (low complexity); sequence MSSSSSSSESSPNLSRSNSL. Disordered regions lie at residues 1 to 281 and 330 to 399; these read MSSS…MPPQ and TSST…NIPS. At S2 the chain carries N-acetylserine. Basic and acidic residues-rich tracts occupy residues 28–42 and 55–73; these read KTED…RQHP and KNKE…EQKS. Y77 is subject to Phosphotyrosine. At S85 the chain carries Phosphoserine. Basic and acidic residues predominate over residues 144–154; the sequence is PPKDVGVKRDY. Residues 157 to 176 show a composition bias toward low complexity; the sequence is SSSTASSGNKSKLSASSSAS. 2 positions are modified to phosphoserine: S185 and S188. Basic and acidic residues predominate over residues 193–203; it reads IPHESKSDTHS. Residues 213–235 show a composition bias toward polar residues; sequence YSTTSAHSSINPAVLLTKSTSQK. Phosphoserine occurs at positions 220, 221, and 236. T242 is modified (phosphothreonine). Residues 252 to 265 are compositionally biased toward polar residues; it reads TRASFDSDVSQASR. The span at 330 to 339 shows a compositional bias: low complexity; that stretch reads TSSTSTSGSS. A compositionally biased stretch (basic and acidic residues) spans 353-375; sequence EKSESTNETEIHEKKEDEHEKIK. A run of 2 helical transmembrane segments spans residues 744-764 and 773-793; these read TMIG…GMNV and IAWW…GWFL. A disordered region spans residues 830–859; sequence FNDRSKNINVRAGPSNKSVASLPSRYSRYD. A Phosphoserine modification is found at S850.

This sequence belongs to the CorA metal ion transporter (MIT) (TC 1.A.35) family.

It is found in the cell membrane. In terms of biological role, plasma membrane magnesium transporter. This Saccharomyces cerevisiae (strain ATCC 204508 / S288c) (Baker's yeast) protein is Magnesium transporter ALR1 (ALR1).